The primary structure comprises 866 residues: Leucine--tRNA ligase (866 aa).

Residues 42–52 carry the 'HIGH' region motif; that stretch reads PYPSGKLHMGH. The 'KMSKS' region motif lies at 630–634; sequence KMSKS. Residue Lys633 participates in ATP binding.

Belongs to the class-I aminoacyl-tRNA synthetase family.

It localises to the cytoplasm. The enzyme catalyses tRNA(Leu) + L-leucine + ATP = L-leucyl-tRNA(Leu) + AMP + diphosphate. The polypeptide is Leucine--tRNA ligase (Laribacter hongkongensis (strain HLHK9)).